A 1161-amino-acid polypeptide reads, in one-letter code: ATP-dependent helicase/deoxyribonuclease subunit B (1161 aa).

The protein belongs to the helicase family. AddB/RexB type 2 subfamily. In terms of assembly, heterodimer of AddA and RexB. It depends on Mg(2+) as a cofactor.

Its function is as follows. The heterodimer acts as both an ATP-dependent DNA helicase and an ATP-dependent, dual-direction single-stranded exonuclease. Recognizes the chi site generating a DNA molecule suitable for the initiation of homologous recombination. This subunit has 5' -&gt; 3' nuclease activity but not helicase activity. The chain is ATP-dependent helicase/deoxyribonuclease subunit B from Oenococcus oeni (strain ATCC BAA-331 / PSU-1).